We begin with the raw amino-acid sequence, 810 residues long: AMP deaminase (810 aa).

A compositionally biased stretch (polar residues) spans Met-1–Asn-10. 2 disordered regions span residues Met-1 to Ser-61 and Ala-114 to Leu-137. Phosphoserine occurs at positions 19, 58, and 61. A compositionally biased stretch (polar residues) spans His-125 to Leu-137. Ser-138 bears the Phosphoserine mark. Zn(2+)-binding residues include His-362 and His-364. Residues His-364 and Lys-433 to Tyr-438 contribute to the substrate site. Zn(2+) is bound at residue His-630. Substrate is bound at residue Glu-633. Catalysis depends on His-652, which acts as the Proton acceptor. Asp-707 contacts Zn(2+). Asp-708–Gln-711 lines the substrate pocket.

Belongs to the metallo-dependent hydrolases superfamily. Adenosine and AMP deaminases family. Homotetramer. It depends on Zn(2+) as a cofactor.

The catalysed reaction is AMP + H2O + H(+) = IMP + NH4(+). It participates in purine metabolism; IMP biosynthesis via salvage pathway; IMP from AMP: step 1/1. Functionally, AMP deaminase plays a critical role in energy metabolism. The protein is AMP deaminase (AMD1) of Saccharomyces cerevisiae (strain ATCC 204508 / S288c) (Baker's yeast).